The chain runs to 579 residues: 2-isopropylmalate synthase (579 aa).

The Pyruvate carboxyltransferase domain maps to 40 to 314 (PRWCAVDLRD…DPMIDFSDID (275 aa)). The Mg(2+) site is built by Asp-49, His-253, His-255, and Asn-289. The interval 456–579 (SSKEDGQWGR…VNRAIRDAQA (124 aa)) is regulatory domain.

Belongs to the alpha-IPM synthase/homocitrate synthase family. LeuA type 2 subfamily. Homodimer. The cofactor is Mg(2+).

The protein resides in the cytoplasm. The catalysed reaction is 3-methyl-2-oxobutanoate + acetyl-CoA + H2O = (2S)-2-isopropylmalate + CoA + H(+). Its pathway is amino-acid biosynthesis; L-leucine biosynthesis; L-leucine from 3-methyl-2-oxobutanoate: step 1/4. In terms of biological role, catalyzes the condensation of the acetyl group of acetyl-CoA with 3-methyl-2-oxobutanoate (2-ketoisovalerate) to form 3-carboxy-3-hydroxy-4-methylpentanoate (2-isopropylmalate). The protein is 2-isopropylmalate synthase of Arthrobacter sp. (strain FB24).